We begin with the raw amino-acid sequence, 251 residues long: Hydroxyacylglutathione hydrolase (251 aa).

Residues H59, H61, D63, H64, H118, D141, and H179 each contribute to the Zn(2+) site.

This sequence belongs to the metallo-beta-lactamase superfamily. Glyoxalase II family. As to quaternary structure, monomer. Zn(2+) serves as cofactor.

The catalysed reaction is an S-(2-hydroxyacyl)glutathione + H2O = a 2-hydroxy carboxylate + glutathione + H(+). Its pathway is secondary metabolite metabolism; methylglyoxal degradation; (R)-lactate from methylglyoxal: step 2/2. In terms of biological role, thiolesterase that catalyzes the hydrolysis of S-D-lactoyl-glutathione to form glutathione and D-lactic acid. This chain is Hydroxyacylglutathione hydrolase, found in Prochlorococcus marinus (strain NATL1A).